The sequence spans 195 residues: Cysteine/O-acetylserine efflux protein (195 aa).

The Periplasmic segment spans residues Met-1–Phe-9. A helical membrane pass occupies residues Trp-10 to Thr-32. The Cytoplasmic segment spans residues Ser-33–Met-46. The helical transmembrane segment at Ser-47–Ile-67 threads the bilayer. At Asp-68–Pro-69 the chain is on the periplasmic side. Residues Ala-70–Ile-90 traverse the membrane as a helical segment. Residues Ala-91–Pro-104 lie on the Cytoplasmic side of the membrane. A helical transmembrane segment spans residues Ile-105 to Val-125. Topologically, residues Thr-126 to Trp-141 are periplasmic. A helical membrane pass occupies residues Val-142–Leu-162. Residues Ala-163–Arg-176 lie on the Cytoplasmic side of the membrane. A helical transmembrane segment spans residues Gln-177–Phe-194. Position 195 (Tyr-195) is a topological domain, periplasmic.

The protein belongs to the Rht family.

The protein localises to the cell inner membrane. The catalysed reaction is O-acetyl-L-serine(in) = O-acetyl-L-serine(out). It catalyses the reaction L-cysteine(in) = L-cysteine(out). Exporter of O-acetylserine (OAS) and cysteine. The chain is Cysteine/O-acetylserine efflux protein (eamB) from Shigella flexneri serotype 5b (strain 8401).